A 1390-amino-acid chain; its full sequence is DNA-directed RNA polymerase III subunit RPC1 (1390 aa).

Cys-69, Cys-72, Cys-79, His-82, Cys-109, and Cys-112 together coordinate Zn(2+). Lys-144 serves as a coordination point for DNA. 2 residues coordinate Zn(2+): Cys-156 and Cys-159. DNA is bound by residues Lys-167, Ser-326, Lys-348, Arg-353, Arg-360, and Arg-366. Lys-445 is modified (N6-acetyllysine). Residue Arg-464 coordinates RNA. The Mg(2+) site is built by Asp-499, Asp-501, and Asp-503. RNA is bound at residue Asp-503. Residues 844-856 are bridging helix; that stretch reads PTEFFFHTMAGRE. Positions 1159, 1305, and 1323 each coordinate DNA.

This sequence belongs to the RNA polymerase beta' chain family. As to quaternary structure, component of the RNA polymerase III (Pol III) complex consisting of 17 subunits: a ten-subunit catalytic core composed of POLR3A/RPC1, POLR3B/RPC2, POLR1C/RPAC1, POLR1D/RPAC2, POLR3K/RPC10, POLR2E/RPABC1, POLR2F/RPABC2, POLR2H/RPABC3, POLR2K/RPABC4 and POLR2L/RPABC5; a mobile stalk composed of two subunits POLR3H/RPC8 and CRCP/RPC9, protruding from the core and functioning primarily in transcription initiation; and additional subunits homologous to general transcription factors of the RNA polymerase II machinery, POLR3C/RPC3-POLR3F/RPC6-POLR3G/RPC7 heterotrimer required for transcription initiation and POLR3D/RPC4-POLR3E/RPC5 heterodimer involved in both transcription initiation and termination. As part of the RNA polymerase III complex, interacts with PKP2. Mg(2+) is required as a cofactor.

The protein localises to the nucleus. The protein resides in the cytoplasm. It is found in the cytosol. The catalysed reaction is RNA(n) + a ribonucleoside 5'-triphosphate = RNA(n+1) + diphosphate. Catalytic core component of RNA polymerase III (Pol III), a DNA-dependent RNA polymerase which synthesizes small non-coding RNAs using the four ribonucleoside triphosphates as substrates. Synthesizes 5S rRNA, snRNAs, tRNAs and miRNAs from at least 500 distinct genomic loci. Pol III-mediated transcription cycle proceeds through transcription initiation, transcription elongation and transcription termination stages. During transcription initiation, Pol III is recruited to DNA promoters type I, II or III with the help of general transcription factors and other specific initiation factors. Once the polymerase has escaped from the promoter it enters the elongation phase during which RNA is actively polymerized, based on complementarity with the template DNA strand. Transcription termination involves the release of the RNA transcript and polymerase from the DNA. Forms Pol III active center together with the second largest subunit POLR3B/RPC2. Appends one nucleotide at a time to the 3' end of the nascent RNA, with POLR3A/RPC1 contributing a Mg(2+)-coordinating DxDGD motif, and POLR3B/RPC2 participating in the coordination of a second Mg(2+) ion and providing lysine residues believed to facilitate Watson-Crick base pairing between the incoming nucleotide and template base. Typically, Mg(2+) ions direct a 5' nucleoside triphosphate to form a phosphodiester bond with the 3' hydroxyl of the preceding nucleotide of the nascent RNA, with the elimination of pyrophosphate. Pol III plays a key role in sensing and limiting infection by intracellular bacteria and DNA viruses. Acts as a nuclear and cytosolic DNA sensor involved in innate immune response. Can sense non-self dsDNA that serves as template for transcription into dsRNA. The non-self RNA polymerase III transcripts, such as Epstein-Barr virus-encoded RNAs (EBERs) induce type I interferon and NF-kappa-B through the RIG-I pathway. This Bos taurus (Bovine) protein is DNA-directed RNA polymerase III subunit RPC1.